Here is a 577-residue protein sequence, read N- to C-terminus: Scoloptoxin SSD14 (577 aa).

The signal sequence occupies residues 1 to 25; the sequence is MGTSYRKLGYVLFLMLGMIVEEGIA.

As to quaternary structure, heterodimer composed of subunits alpha and beta; probably disulfide-linked. Expressed by the venom gland.

Its subcellular location is the secreted. Its function is as follows. Dose-dependently induces human platelet aggregation on both plasma rich platelet and washed platelet (max. response at 3.2 ug/mL) and causes hemolysis against mouse and rabbit erythrocytes (35 and 65% respectively at 5 ug/mL). Does not show hemolytic activity against human erythrocytes (even at 100 ug/mL). This chain is Scoloptoxin SSD14, found in Scolopendra dehaani (Thai centipede).